A 247-amino-acid polypeptide reads, in one-letter code: Ribonuclease PH (247 aa).

Phosphate is bound by residues Arg90 and Gly128–Arg130.

Belongs to the RNase PH family. Homohexameric ring arranged as a trimer of dimers.

It carries out the reaction tRNA(n+1) + phosphate = tRNA(n) + a ribonucleoside 5'-diphosphate. Its function is as follows. Phosphorolytic 3'-5' exoribonuclease that plays an important role in tRNA 3'-end maturation. Removes nucleotide residues following the 3'-CCA terminus of tRNAs; can also add nucleotides to the ends of RNA molecules by using nucleoside diphosphates as substrates, but this may not be physiologically important. Probably plays a role in initiation of 16S rRNA degradation (leading to ribosome degradation) during starvation. In Synechococcus sp. (strain CC9605), this protein is Ribonuclease PH.